The following is a 188-amino-acid chain: V-type ATP synthase subunit E (188 aa).

It belongs to the V-ATPase E subunit family.

In terms of biological role, produces ATP from ADP in the presence of a proton gradient across the membrane. The chain is V-type ATP synthase subunit E (atpE) from Thermus thermophilus (strain ATCC 27634 / DSM 579 / HB8).